The chain runs to 671 residues: UvrABC system protein B (671 aa).

The Helicase ATP-binding domain occupies Glu26–Arg414. Gly39–Thr46 is an ATP binding site. Positions Tyr92 to Val115 match the Beta-hairpin motif. In terms of domain architecture, Helicase C-terminal spans Gln431–Ile593. One can recognise a UVR domain in the interval Asp631 to Gln666.

It belongs to the UvrB family. In terms of assembly, forms a heterotetramer with UvrA during the search for lesions. Interacts with UvrC in an incision complex.

The protein localises to the cytoplasm. Functionally, the UvrABC repair system catalyzes the recognition and processing of DNA lesions. A damage recognition complex composed of 2 UvrA and 2 UvrB subunits scans DNA for abnormalities. Upon binding of the UvrA(2)B(2) complex to a putative damaged site, the DNA wraps around one UvrB monomer. DNA wrap is dependent on ATP binding by UvrB and probably causes local melting of the DNA helix, facilitating insertion of UvrB beta-hairpin between the DNA strands. Then UvrB probes one DNA strand for the presence of a lesion. If a lesion is found the UvrA subunits dissociate and the UvrB-DNA preincision complex is formed. This complex is subsequently bound by UvrC and the second UvrB is released. If no lesion is found, the DNA wraps around the other UvrB subunit that will check the other stand for damage. This chain is UvrABC system protein B, found in Yersinia pestis.